Here is a 314-residue protein sequence, read N- to C-terminus: DNA oxidative demethylase ALKBH2 (314 aa).

Over residues 1–28 (MTNPLNSTAANRSNQPSSDGISDGQITN) the composition is skewed to polar residues. The segment at 1–75 (MTNPLNSTAA…KRFHYHQDQR (75 aa)) is disordered. Over residues 57 to 75 (NGKDDSDTKKRFHYHQDQR) the composition is skewed to basic and acidic residues. Substrate is bound by residues W132 and 160–163 (ALVY). In terms of domain architecture, Fe2OG dioxygenase spans 194-314 (RFNSLLLNRY…RINLTFRLVL (121 aa)). 2-oxoglutarate is bound at residue 201 to 203 (NRY). 2 residues coordinate Fe cation: H213 and D215. D216 is a substrate binding site. Positions 242–271 (KKDEESSQGKTGDSGPAKKRLKRSSREDQQ) are disordered. Position 293 (H293) interacts with Fe cation. Residues R305 and 305–311 (RINLTFR) contribute to the 2-oxoglutarate site.

The protein belongs to the alkB family. Fe(2+) serves as cofactor. In terms of tissue distribution, expressed ubiquitously, including in seedlings, leaves and flowers.

It is found in the nucleus. It carries out the reaction a methylated nucleobase within DNA + 2-oxoglutarate + O2 = a nucleobase within DNA + formaldehyde + succinate + CO2. Functionally, dioxygenase that repairs alkylated DNA containing 1-methyladenine and 1-ethenoadenine by oxidative demethylation. Accepts double-stranded and single-stranded substrates, with a preference for dsDNA over ssDNA. Confers resistance to methylating agents such as methylmethanesulphonate (MMS). The polypeptide is DNA oxidative demethylase ALKBH2 (ALKBH2) (Arabidopsis thaliana (Mouse-ear cress)).